We begin with the raw amino-acid sequence, 366 residues long: Peptide chain release factor 2 (366 aa).

Q251 bears the N5-methylglutamine mark.

It belongs to the prokaryotic/mitochondrial release factor family. Methylated by PrmC. Methylation increases the termination efficiency of RF2.

The protein localises to the cytoplasm. Its function is as follows. Peptide chain release factor 2 directs the termination of translation in response to the peptide chain termination codons UGA and UAA. The polypeptide is Peptide chain release factor 2 (Campylobacter lari (strain RM2100 / D67 / ATCC BAA-1060)).